A 479-amino-acid chain; its full sequence is MKKASELIFIPIPGIGHIVSTVEIAKLLLCRDDNLFITILIMKFPFTADGSDVYIKSLAVDPSLKTQRIRFVNLPQEHFQGTGATGFFTFIDSHKSHVKDAVTRLMETKSETTRIAGFVIDMFCTGMIDLANEFGLPSYVFYTSGAADLGLMFHLQALRDEENKDCTEFKDSDAELVVSSFVNPLPAARVLPSVVFEKEGGNFFLNFAKRYRETKGILVNTFLELEPHAIQSLSSDGKILPVYPVGPILNVKSEGNQVSSEKSKQKSDILEWLDDQPPSSVVFLCFGSMGCFGEDQVKEIAHALEQGGIRFLWSLRQPSKEKIGFPSDYTDYKAVLPEGFLDRTTDLGKVIGWAPQLAILAHPAVGGFVSHCGWNSTLESIWYGVPIATWPFYAEQQVNAFELVKELKLAVEIDMGYRKDSGVIVSRENIEKGIKEVMEQESELRKRVKEMSQMSRKALEEDGSSYSSLGRFLDQIQTS.

Catalysis depends on histidine 17, which acts as the Proton acceptor. An an anthocyanidin-binding site is contributed by histidine 17. Catalysis depends on aspartate 121, which acts as the Charge relay. UDP-alpha-D-glucose contacts are provided by threonine 143, alanine 354, glutamine 356, histidine 371, tryptophan 374, asparagine 375, serine 376, and glutamate 379. An an anthocyanidin-binding site is contributed by alanine 394. UDP-alpha-D-glucose contacts are provided by glutamate 395 and glutamine 396. Residues 454-479 (MSRKALEEDGSSYSSLGRFLDQIQTS) are disordered.

It belongs to the UDP-glycosyltransferase family. Strongly expressed in achenes, with lower expression levels detected in receptacles.

It catalyses the reaction a flavonol + UDP-alpha-D-glucose = a flavonol 3-O-beta-D-glucoside + UDP + H(+). Broad spectrum multifunctional glucosyltransferase. Catalyzes the formation of flavonol 3-O-glucosides during fruit ripening. Accepted substrates include several flavonoids, hydroxycoumarins and beta-naphthols. Uses UDP-Glc as a sugar donor, but not UDP-Gal or UDP-GlcUA. May also be involved in detoxification of xenobiotics. This is UDP-glucose flavonoid 3-O-glucosyltransferase 6 from Fragaria ananassa (Strawberry).